A 232-amino-acid chain; its full sequence is Ubiquinone biosynthesis O-methyltransferase (232 aa).

R36, G55, D76, and L120 together coordinate S-adenosyl-L-methionine.

Belongs to the methyltransferase superfamily. UbiG/COQ3 family.

It catalyses the reaction a 3-demethylubiquinol + S-adenosyl-L-methionine = a ubiquinol + S-adenosyl-L-homocysteine + H(+). The enzyme catalyses a 3-(all-trans-polyprenyl)benzene-1,2-diol + S-adenosyl-L-methionine = a 2-methoxy-6-(all-trans-polyprenyl)phenol + S-adenosyl-L-homocysteine + H(+). The protein operates within cofactor biosynthesis; ubiquinone biosynthesis. In terms of biological role, O-methyltransferase that catalyzes the 2 O-methylation steps in the ubiquinone biosynthetic pathway. This Stutzerimonas stutzeri (strain A1501) (Pseudomonas stutzeri) protein is Ubiquinone biosynthesis O-methyltransferase.